Consider the following 85-residue polypeptide: U4-theraphotoxin-Hhn1a (85 aa).

The first 22 residues, 1 to 22 (MKVTLIAILTCAAVLVLHTTAA), serve as a signal peptide directing secretion. The propeptide occupies 23–48 (EELEAEGQLMEVGMPDTELAAVDEER). Disulfide bonds link cysteine 52-cysteine 66, cysteine 56-cysteine 77, and cysteine 71-cysteine 82.

It belongs to the neurotoxin 12 (Hwtx-2) family. 02 (Hwtx-2) subfamily. In terms of assembly, monomer. In terms of tissue distribution, expressed by the venom gland.

It is found in the secreted. Neurotoxin active on both insects and mammals. This Cyriopagopus hainanus (Chinese bird spider) protein is U4-theraphotoxin-Hhn1a.